The sequence spans 346 residues: UPF0718 protein YraQ (346 aa).

9 consecutive transmembrane segments (helical) span residues 12-32 (PIQW…LWYV), 71-91 (MIYF…GSLI), 113-133 (LLGT…APVA), 146-166 (ALAF…FMGF), 167-187 (VLGW…VLLI), 223-243 (ALWT…LVLG), 260-280 (SLMW…PTAA), 296-316 (APAL…LIML), and 326-346 (WLTG…ALLF).

The protein belongs to the UPF0718 family.

The protein localises to the cell membrane. This Escherichia coli (strain K12) protein is UPF0718 protein YraQ (yraQ).